We begin with the raw amino-acid sequence, 343 residues long: Aspartate carbamoyltransferase catalytic subunit (343 aa).

Arg-91 and Thr-92 together coordinate carbamoyl phosphate. Lys-119 contributes to the L-aspartate binding site. Carbamoyl phosphate contacts are provided by Arg-141, His-171, and Gln-174. Residues Arg-204 and Arg-259 each coordinate L-aspartate. Residues Gly-300 and Pro-301 each contribute to the carbamoyl phosphate site.

Belongs to the aspartate/ornithine carbamoyltransferase superfamily. ATCase family. In terms of assembly, heterododecamer (2C3:3R2) of six catalytic PyrB chains organized as two trimers (C3), and six regulatory PyrI chains organized as three dimers (R2).

It catalyses the reaction carbamoyl phosphate + L-aspartate = N-carbamoyl-L-aspartate + phosphate + H(+). The protein operates within pyrimidine metabolism; UMP biosynthesis via de novo pathway; (S)-dihydroorotate from bicarbonate: step 2/3. Its function is as follows. Catalyzes the condensation of carbamoyl phosphate and aspartate to form carbamoyl aspartate and inorganic phosphate, the committed step in the de novo pyrimidine nucleotide biosynthesis pathway. This chain is Aspartate carbamoyltransferase catalytic subunit, found in Burkholderia mallei (strain NCTC 10247).